The chain runs to 255 residues: Type III pantothenate kinase (255 aa).

6-13 (DIGNTTSE) provides a ligand contact to ATP. Substrate is bound by residues tyrosine 100 and 107-110 (GIDR). The active-site Proton acceptor is aspartate 109. Residue aspartate 129 coordinates K(+). Threonine 132 provides a ligand contact to ATP. Substrate is bound at residue threonine 184.

It belongs to the type III pantothenate kinase family. Homodimer. Requires NH4(+) as cofactor. The cofactor is K(+).

Its subcellular location is the cytoplasm. The catalysed reaction is (R)-pantothenate + ATP = (R)-4'-phosphopantothenate + ADP + H(+). It functions in the pathway cofactor biosynthesis; coenzyme A biosynthesis; CoA from (R)-pantothenate: step 1/5. Catalyzes the phosphorylation of pantothenate (Pan), the first step in CoA biosynthesis. This chain is Type III pantothenate kinase, found in Persephonella marina (strain DSM 14350 / EX-H1).